We begin with the raw amino-acid sequence, 509 residues long: Angiopoietin-4 (509 aa).

Positions 1–21 (MLCQPAMLLDGLLLLATMAAA) are cleaved as a signal peptide. Residues N105, N135, N149, N167, N256, N306, N317, and N417 are each glycosylated (N-linked (GlcNAc...) asparagine). Residues 181–269 (LSTNKLERQM…LQQQQQQLTE (89 aa)) are a coiled coil. Positions 288–508 (KTPKPVFQDC…GTRMMLRPMG (221 aa)) constitute a Fibrinogen C-terminal domain. A disulfide bond links C297 and C326. The interval 416–436 (VNDSSSSAGRKNSLAPQGTKF) is disordered. A disulfide bridge connects residues C450 and C463.

In terms of assembly, homodimer; disulfide-linked. Interacts with TEK/TIE2. Widely expressed.

It is found in the secreted. Its function is as follows. Binds to TEK/TIE2, modulating ANGPT1 signaling. Can induce tyrosine phosphorylation of TEK/TIE2. Promotes endothelial cell survival, migration and angiogenesis. In Mus musculus (Mouse), this protein is Angiopoietin-4 (Angpt4).